Consider the following 600-residue polypeptide: Elongation factor 4 (600 aa).

The tr-type G domain occupies 4–186; the sequence is DTIRNFSIIA…EIVKKIPPPE (183 aa). GTP contacts are provided by residues 16 to 21 and 133 to 136; these read DHGKST and NKID.

It belongs to the TRAFAC class translation factor GTPase superfamily. Classic translation factor GTPase family. LepA subfamily.

Its subcellular location is the cell inner membrane. It carries out the reaction GTP + H2O = GDP + phosphate + H(+). Required for accurate and efficient protein synthesis under certain stress conditions. May act as a fidelity factor of the translation reaction, by catalyzing a one-codon backward translocation of tRNAs on improperly translocated ribosomes. Back-translocation proceeds from a post-translocation (POST) complex to a pre-translocation (PRE) complex, thus giving elongation factor G a second chance to translocate the tRNAs correctly. Binds to ribosomes in a GTP-dependent manner. This is Elongation factor 4 from Geobacter sulfurreducens (strain ATCC 51573 / DSM 12127 / PCA).